The sequence spans 606 residues: MEVLRFTAVKSLNSCVRPEFTAMSSVIVPISTVKVSGTRKSKKKALICAKATEILSSPATVTEPLKAEPAEAPVPLLRVSPSSLQCEPGYLLPNSPVLGTGGVTGYEYLTNILSSKVYDVAYETPLQKAPKLSERLGVNVWLKREDLQPVFSFKIRGAYNMMAKLPKEQLEKGVICSSAGNHAQGVALSAQRLGCDAVIVMPVTTPDIKWKSVKRLGATVVLVGDSYDEAQAYAKKRAESEGRTFIPPFDHPDVIVGQGTVGMEINRQLKDNIHAIFVPVGGGGLIAGIAAYLKRVAPDIKIIGVEPLDANALALSLHHGQRVMLDQVGGFADGVAVKVVGEETYRLCEELIDGVVLVGRDAICASIKDMFEEKRSILEPAGALALAGAEAYCKYYGLKGENVVAITSGANMNFDRLRLVTELADVGRQREAVLATFMPEDPGSFKKFAEMVGPMNITEFKYRYNSDKERALVLYSVGLHTILELEGMVERMESADLQTINLTDNDLVKDHLRHLMGGRTNVHNELLCRFTFPEKPGALMKFLDAFSPRWNISLFHYRAQGDTGANVLVGIQVPPDEVVEFEGRADSLGYEYAMESLNEAYQLIMH.

Lys-154 is modified (N6-(pyridoxal phosphate)lysine). ACT-like domains lie at 432-504 (AVLA…NLTD) and 526-597 (LLCR…MESL).

This sequence belongs to the serine/threonine dehydratase family. Requires pyridoxal 5'-phosphate as cofactor. Expressed constitutively in all tissues examined including root, stem, petiole, leaf, immature flower bud, unopened flower and opened flower with the highest expression in opened flower and lowest in leaf.

It localises to the plastid. Its subcellular location is the chloroplast. It carries out the reaction L-threonine = 2-oxobutanoate + NH4(+). The protein operates within amino-acid biosynthesis; L-isoleucine biosynthesis; 2-oxobutanoate from L-threonine: step 1/1. With respect to regulation, strongly inhibited by 1 mM isoleucine. Functionally, has a housekeeping role in isoleucine biosynthesis. This chain is Threonine dehydratase 1 biosynthetic, chloroplastic, found in Solanum lycopersicum (Tomato).